The following is a 690-amino-acid chain: Elongation factor G (690 aa).

The region spanning Asp-8–Leu-282 is the tr-type G domain. Residues Ala-17–Thr-24, Asp-81–His-85, and Asn-135–Asp-138 contribute to the GTP site.

It belongs to the TRAFAC class translation factor GTPase superfamily. Classic translation factor GTPase family. EF-G/EF-2 subfamily.

It localises to the cytoplasm. Functionally, catalyzes the GTP-dependent ribosomal translocation step during translation elongation. During this step, the ribosome changes from the pre-translocational (PRE) to the post-translocational (POST) state as the newly formed A-site-bound peptidyl-tRNA and P-site-bound deacylated tRNA move to the P and E sites, respectively. Catalyzes the coordinated movement of the two tRNA molecules, the mRNA and conformational changes in the ribosome. This chain is Elongation factor G, found in Caldanaerobacter subterraneus subsp. tengcongensis (strain DSM 15242 / JCM 11007 / NBRC 100824 / MB4) (Thermoanaerobacter tengcongensis).